The following is an 89-amino-acid chain: Small ribosomal subunit protein uS15 (89 aa).

It belongs to the universal ribosomal protein uS15 family. As to quaternary structure, part of the 30S ribosomal subunit. Forms a bridge to the 50S subunit in the 70S ribosome, contacting the 23S rRNA.

In terms of biological role, one of the primary rRNA binding proteins, it binds directly to 16S rRNA where it helps nucleate assembly of the platform of the 30S subunit by binding and bridging several RNA helices of the 16S rRNA. Functionally, forms an intersubunit bridge (bridge B4) with the 23S rRNA of the 50S subunit in the ribosome. The polypeptide is Small ribosomal subunit protein uS15 (Orientia tsutsugamushi (strain Boryong) (Rickettsia tsutsugamushi)).